A 380-amino-acid chain; its full sequence is Cytochrome b (380 aa).

The next 4 membrane-spanning stretches (helical) occupy residues 34–54 (FGSL…FLAM), 78–99 (WLVR…YLHI), 114–134 (WNIG…GYVL), and 179–199 (FFAF…LHLL). Residues histidine 84 and histidine 98 each contribute to the heme b site. Residues histidine 183 and histidine 197 each coordinate heme b. Histidine 202 serves as a coordination point for a ubiquinone. 4 helical membrane-spanning segments follow: residues 227 to 247 (YKDT…SMLS), 289 to 309 (LGGV…PMIH), 321 to 341 (MTQF…WIGG), and 348 to 368 (FIEI…IFMP).

The protein belongs to the cytochrome b family. In terms of assembly, the cytochrome bc1 complex contains 3 respiratory subunits (MT-CYB, CYC1 and UQCRFS1), 2 core proteins (UQCRC1 and UQCRC2) and probably 6 low-molecular weight proteins. Heme b serves as cofactor.

Its subcellular location is the mitochondrion inner membrane. In terms of biological role, component of the ubiquinol-cytochrome c reductase complex (complex III or cytochrome b-c1 complex) that is part of the mitochondrial respiratory chain. The b-c1 complex mediates electron transfer from ubiquinol to cytochrome c. Contributes to the generation of a proton gradient across the mitochondrial membrane that is then used for ATP synthesis. The chain is Cytochrome b (mt-cyb) from Ranodon sibiricus (Siberian salamander).